A 66-amino-acid chain; its full sequence is Large ribosomal subunit protein bL31 (66 aa).

Residues C16, C18, C36, and C39 each contribute to the Zn(2+) site.

The protein belongs to the bacterial ribosomal protein bL31 family. Type A subfamily. Part of the 50S ribosomal subunit. Zn(2+) serves as cofactor.

Binds the 23S rRNA. This chain is Large ribosomal subunit protein bL31, found in Pelobacter propionicus (strain DSM 2379 / NBRC 103807 / OttBd1).